Consider the following 314-residue polypeptide: Solute carrier family 25 member 33 (314 aa).

3 Solcar repeats span residues 4–111, 119–206, and 224–308; these read KDTL…SKET, NSGV…LKKY, and SDFL…IVHL. 6 consecutive transmembrane segments (helical) span residues 7-27, 44-58, 114-134, 183-203, 226-246, and 291-311; these read LLHLFAGGCGGTVGAIMTCPL, VFQVQLGTLNGAGVI, GIFVPNSGVVHMSSAGFAAFI, LTASYAGISETMICFLIYETL, FLGLMFAAAFAKGCASCIAYP, and QIPNTAIVLSTYELIVHLLAE.

It belongs to the mitochondrial carrier (TC 2.A.29) family.

It is found in the mitochondrion inner membrane. Mitochondrial transporter that imports/exports pyrimidine nucleotides into and from mitochondria which participates in dendritic cell endocytosis. The sequence is that of Solute carrier family 25 member 33 (slc25a33) from Danio rerio (Zebrafish).